The primary structure comprises 192 residues: Small ribosomal subunit protein uS4B (192 aa).

A phosphoserine mark is found at serine 89 and serine 179. The 75-residue stretch at 107–181 folds into the S4 RNA-binding domain; sequence RRLQTQVFKL…CKRKRLRSQQ (75 aa). The interval 166–192 is disordered; sequence GGRPGRCKRKRLRSQQEGGEGEEAEEE.

It belongs to the universal ribosomal protein uS4 family. In terms of assembly, component of the small ribosomal subunit (SSU). Mature yeast ribosomes consist of a small (40S) and a large (60S) subunit. The 40S small subunit contains 1 molecule of ribosomal RNA (18S rRNA) and at least 33 different proteins. The large 60S subunit contains 3 rRNA molecules (25S, 5.8S and 5S rRNA) and at least 46 different proteins. Interacts with snoRNA U3. uS11 interacts with MPP10. Component of the ribosomal small subunit (SSU) processome composed of at least 40 protein subunits and snoRNA U3.

It is found in the cytoplasm. Its function is as follows. Component of the ribosome, a large ribonucleoprotein complex responsible for the synthesis of proteins in the cell. The small ribosomal subunit (SSU) binds messenger RNAs (mRNAs) and translates the encoded message by selecting cognate aminoacyl-transfer RNA (tRNA) molecules. The large subunit (LSU) contains the ribosomal catalytic site termed the peptidyl transferase center (PTC), which catalyzes the formation of peptide bonds, thereby polymerizing the amino acids delivered by tRNAs into a polypeptide chain. The nascent polypeptides leave the ribosome through a tunnel in the LSU and interact with protein factors that function in enzymatic processing, targeting, and the membrane insertion of nascent chains at the exit of the ribosomal tunnel. uS4 is involved in nucleolar processing of pre-18S ribosomal RNA and ribosome assembly. The sequence is that of Small ribosomal subunit protein uS4B (rps902) from Schizosaccharomyces pombe (strain 972 / ATCC 24843) (Fission yeast).